Here is a 278-residue protein sequence, read N- to C-terminus: MHKAGQLGLCARAWNSVRMASSGMTRRDPLANKVALVTASTDGIGFAIARRLAQDGAHVVVSSRKQQNVDQAVATLQGEGLSVTGTVCHVGKAEDRERLVATAVKLHGGIDILVSNAAVNPFFGSLMDVTEEVWDKTLDINVKAPALMTKAVVPEMEKRGGGSVVIVSSIAAFSPSPGFSPYNVSKTALLGLTKTLAIELAPRNIRVNCLAPGLIKTSFSRMLWMDKEKEESMKETLRIRRLGEPEDCAGIVSFLCSEDASYITGETVVVGGGTPSRL.

Position 36-60 (36-60) interacts with NADP(+); sequence LVTASTDGIGFAIARRLAQDGAHVV. Lys92 is subject to N6-acetyllysine; alternate. Lys92 carries the N6-succinyllysine; alternate modification. Lys105 carries the N6-acetyllysine modification. Position 169 (Ser169) interacts with substrate. The Proton acceptor role is filled by Tyr182. Lys186 lines the NADP(+) pocket. At Lys216 the chain carries N6-acetyllysine; alternate. Residue Lys216 is modified to N6-succinyllysine; alternate. Ser220 is subject to Phosphoserine. An N6-succinyllysine mark is found at Lys227 and Lys234. A Peroxisomal targeting signal motif is present at residues 276-278; the sequence is SRL.

It belongs to the short-chain dehydrogenases/reductases (SDR) family. In terms of assembly, homotetramer.

It localises to the peroxisome. The enzyme catalyses a secondary alcohol + NADP(+) = a ketone + NADPH + H(+). It carries out the reaction 3beta-hydroxy-5beta-pregnane-20-one + NADP(+) = 5beta-pregnan-3,20-dione + NADPH + H(+). It catalyses the reaction 5beta-dihydrotestosterone + NADPH + H(+) = 5beta-androstane-3beta,17beta-diol + NADP(+). The catalysed reaction is 5beta-androstane-3,17-dione + NADPH + H(+) = 3beta-hydroxy-5beta-androstane-17-one + NADP(+). The enzyme catalyses isatin + NADPH + H(+) = 3-hydroxyindolin-2-one + NADP(+). It carries out the reaction lithocholate + NADP(+) = 3-oxo-5beta-cholan-24-oate + NADPH + H(+). It catalyses the reaction 3-oxo-5beta-cholan-24-oate + NADPH + H(+) = isolithocholate + NADP(+). Its function is as follows. NADPH-dependent oxidoreductase which catalyzes the reduction of a variety of compounds bearing carbonyl groups including ketosteroids, alpha-dicarbonyl compounds, aldehydes, aromatic ketones and quinones. Reduces 3-ketosteroids and benzil into 3beta-hydroxysteroids and R-benzoin, respectively, in contrast to the stereoselectivity of non-primate DHRS4s which produce 3alpha-hydroxysteroids and S-benzoin. Diplays low activity toward all-trans-retinal and no activity toward 9-cis-retinal as compared to non-primate mammals. In the reverse reaction, catalyze the NAD-dependent oxidation of 3beta-hydroxysteroids and alcohol, but with much lower efficiency. Involved in the metabolism of 3beta-hydroxysteroids, isatin and xenobiotic carbonyl compounds. This chain is Dehydrogenase/reductase SDR family member 4 (DHRS4), found in Pongo abelii (Sumatran orangutan).